The chain runs to 334 residues: Protein CUP-SHAPED COTYLEDON 3 (334 aa).

An NAC domain is found at 22-171; the sequence is LPPGFRFHPT…EWVICRVFNK (150 aa). Residues 121 to 177 mediate DNA binding; sequence VGMKKTLVFYKGRAPRGLKTKWVMHEYRLENDHSHRHTCKEEWVICRVFNKTGDRKN.

As to expression, in a general manner, present at the boundaries between mersitems and araising primordia.

The protein resides in the nucleus. Functionally, transcription activator. Involved in molecular mechanisms regulating shoot apical meristem (SAM) formation during embryogenesis and organ separation. Required for axillary meristem initiation and separation of the meristem from the main stem. May act as an inhibitor of cell division. This is Protein CUP-SHAPED COTYLEDON 3 (NAC031) from Arabidopsis thaliana (Mouse-ear cress).